Here is a 364-residue protein sequence, read N- to C-terminus: 2-oxoadipate dioxygenase/decarboxylase, chloroplastic/amyloplastic (364 aa).

The N-terminal 49 residues, 1–49 (MAVALAGARSPGAGAILSLRRLAPAAAAPVRLGGSGTPGTRRRRGIAMA), are a transit peptide targeting the chloroplast. The 2-oxoadipate site is built by histidine 107 and arginine 111. Histidine 107 contributes to the Fe(2+) binding site. Histidine 243 contacts Fe(2+). The 2-oxoadipate site is built by glutamine 289 and tyrosine 313. Fe(2+) is bound at residue glutamate 315.

It belongs to the 2-oxoadipate dioxygenase/decarboxylase family. Fe(2+) serves as cofactor. Expressed in roots, stems, leaf sheaths, leaf blades, panicles, and endosperm.

It is found in the plastid. It localises to the chloroplast. The protein localises to the amyloplast. It carries out the reaction 2-oxoadipate + O2 = (R)-2-hydroxyglutarate + CO2. It participates in amino-acid degradation. Its function is as follows. Catalyzes the decarboxylation and hydroxylation of 2-oxoadipate (2OA) to form D-2-hydroxyglutarate (D-2-HGA). Is involved in a D-lysine catabolic pathway. Involved in the regulation of starch synthesis and amyloplast development within the peripheral endosperm during the grain-filling stage. The protein is 2-oxoadipate dioxygenase/decarboxylase, chloroplastic/amyloplastic of Oryza sativa subsp. japonica (Rice).